We begin with the raw amino-acid sequence, 341 residues long: Heme A synthase (341 aa).

Transmembrane regions (helical) follow at residues 11–31 (AVSTWLLVVAALVCAMIIIGG), 101–121 (LIGLVYFVPFVFFWMRGHLSA), 127–147 (LFGLFLLGGAQGAIGWWMVAS), 160–180 (LATHLGMAFVILGLSIWFSLE), and 194–214 (AGVTAGLLGLVFVQIILGAFV). H259 serves as a coordination point for heme. The next 3 helical transmembrane spans lie at 261–278 (WTGYLVALGVFAYAWQVW), 288–308 (FMVILPALVIGQIALGIAALL), and 315–335 (LSLAHQAGAILLFIAMVAAAW). H319 lines the heme pocket.

This sequence belongs to the COX15/CtaA family. Type 2 subfamily. In terms of assembly, interacts with CtaB. Requires heme b as cofactor.

The protein resides in the cell membrane. It catalyses the reaction Fe(II)-heme o + 2 A + H2O = Fe(II)-heme a + 2 AH2. It participates in porphyrin-containing compound metabolism; heme A biosynthesis; heme A from heme O: step 1/1. Functionally, catalyzes the conversion of heme O to heme A by two successive hydroxylations of the methyl group at C8. The first hydroxylation forms heme I, the second hydroxylation results in an unstable dihydroxymethyl group, which spontaneously dehydrates, resulting in the formyl group of heme A. The polypeptide is Heme A synthase (Maricaulis maris (strain MCS10) (Caulobacter maris)).